Here is a 135-residue protein sequence, read N- to C-terminus: Large ribosomal subunit protein uL16m (135 aa).

This sequence belongs to the universal ribosomal protein uL16 family.

It is found in the mitochondrion. The protein is Large ribosomal subunit protein uL16m (RPL16) of Marchantia polymorpha (Common liverwort).